A 223-amino-acid polypeptide reads, in one-letter code: Urease accessory protein UreG (223 aa).

Residues 1–30 are disordered; sequence MAKHSHDHTHDHHDRPRRVRKPGEPLRIGV. Residue 32 to 39 participates in GTP binding; the sequence is GPVGSGKT.

Belongs to the SIMIBI class G3E GTPase family. UreG subfamily. In terms of assembly, homodimer. UreD, UreF and UreG form a complex that acts as a GTP-hydrolysis-dependent molecular chaperone, activating the urease apoprotein by helping to assemble the nickel containing metallocenter of UreC. The UreE protein probably delivers the nickel.

The protein localises to the cytoplasm. Its function is as follows. Facilitates the functional incorporation of the urease nickel metallocenter. This process requires GTP hydrolysis, probably effectuated by UreG. This is Urease accessory protein UreG from Mycobacterium ulcerans (strain Agy99).